The chain runs to 788 residues: 5-methyltetrahydropteroyltriglutamate--homocysteine methyltransferase (788 aa).

Residues 24–27 (RELK) and K140 contribute to the 5-methyltetrahydropteroyltri-L-glutamate site. L-homocysteine-binding positions include 463–465 (IGS) and E516. L-methionine contacts are provided by residues 463-465 (IGS) and E516. 5-methyltetrahydropteroyltri-L-glutamate is bound by residues 547 to 548 (RC) and W593. D631 is an L-homocysteine binding site. D631 is a binding site for L-methionine. E637 contributes to the 5-methyltetrahydropteroyltri-L-glutamate binding site. The Zn(2+) site is built by H673, C675, and E697. H726 acts as the Proton donor in catalysis. C758 contacts Zn(2+).

It belongs to the vitamin-B12 independent methionine synthase family. Zn(2+) is required as a cofactor.

The catalysed reaction is 5-methyltetrahydropteroyltri-L-glutamate + L-homocysteine = tetrahydropteroyltri-L-glutamate + L-methionine. It functions in the pathway amino-acid biosynthesis; L-methionine biosynthesis via de novo pathway; L-methionine from L-homocysteine (MetE route): step 1/1. Its function is as follows. Catalyzes the transfer of a methyl group from 5-methyltetrahydrofolate to homocysteine resulting in methionine formation. The polypeptide is 5-methyltetrahydropteroyltriglutamate--homocysteine methyltransferase (Rhodopseudomonas palustris (strain ATCC BAA-98 / CGA009)).